The sequence spans 300 residues: RNA polymerase sigma factor RpoH (300 aa).

Residues 53–122 (LVTSHLRLVA…IQEYILRSWS (70 aa)) are sigma-70 factor domain-2. The Interaction with polymerase core subunit RpoC motif lies at 77 to 80 (EVVS). The segment at 231 to 282 (AMGVLNDRERRIFEARRLAEDPVTLEELSSEFDISRERVRQIEVRAFEKVQE) is sigma-70 factor domain-4. The H-T-H motif DNA-binding region spans 255–274 (LEELSSEFDISRERVRQIEV).

It belongs to the sigma-70 factor family. RpoH subfamily. As to quaternary structure, interacts with the RNA polymerase core enzyme.

The protein resides in the cytoplasm. Its function is as follows. Sigma factors are initiation factors that promote the attachment of RNA polymerase to specific initiation sites and are then released. This sigma factor is involved in regulation of expression of heat shock genes. This is RNA polymerase sigma factor RpoH from Rhizobium radiobacter (Agrobacterium tumefaciens).